The chain runs to 475 residues: tRNA (guanine(37)-N(1))-methyltransferase (475 aa).

Residues His219, 258-259 (DL), and 286-287 (DG) contribute to the S-adenosyl-L-methionine site. The segment at 306-328 (KITKQKPTSNDKKRNRKVESPTV) is disordered. Position 349 (Asn349) interacts with S-adenosyl-L-methionine. Over residues 456–469 (NLVSQSDVSKSSDN) the composition is skewed to polar residues. The interval 456–475 (NLVSQSDVSKSSDNILEKDT) is disordered.

The protein belongs to the class I-like SAM-binding methyltransferase superfamily. TRM5/TYW2 family. As to quaternary structure, monomer.

It localises to the mitochondrion matrix. The protein resides in the nucleus. The protein localises to the cytoplasm. The enzyme catalyses guanosine(37) in tRNA + S-adenosyl-L-methionine = N(1)-methylguanosine(37) in tRNA + S-adenosyl-L-homocysteine + H(+). Specifically methylates the N1 position of guanosine-37 in various cytoplasmic and mitochondrial tRNAs. Methylation is not dependent on the nature of the nucleoside 5' of the target nucleoside. This is the first step in the biosynthesis of wybutosine (yW), a modified base adjacent to the anticodon of tRNAs and required for accurate decoding. This Batrachochytrium dendrobatidis (strain JAM81 / FGSC 10211) (Frog chytrid fungus) protein is tRNA (guanine(37)-N(1))-methyltransferase.